The primary structure comprises 60 residues: Large ribosomal subunit protein bL32 (60 aa).

The protein belongs to the bacterial ribosomal protein bL32 family.

This Moorella thermoacetica (strain ATCC 39073 / JCM 9320) protein is Large ribosomal subunit protein bL32.